We begin with the raw amino-acid sequence, 309 residues long: uncharacterized protein (309 aa).

The S4 RNA-binding domain occupies 11 to 87 (QRLDTFLATL…FPLDILYEDE (77 aa)). The active site involves aspartate 131.

It belongs to the pseudouridine synthase RluA family.

It carries out the reaction a uridine in RNA = a pseudouridine in RNA. This is an uncharacterized protein from Mycoplasma pneumoniae (strain ATCC 29342 / M129 / Subtype 1) (Mycoplasmoides pneumoniae).